The sequence spans 365 residues: tRNA N6-adenosine threonylcarbamoyltransferase (365 aa).

Fe cation-binding residues include His-119 and His-123. Residues 141–145, Asp-174, and Gly-187 each bind substrate; that span reads LVSGG. Positions 184–203 are disordered; the sequence is QPGGPSVEGEARQGDPKRFR. The segment covering 192-201 has biased composition (basic and acidic residues); sequence GEARQGDPKR. Asn-289 contributes to the substrate binding site. Asp-317 provides a ligand contact to Fe cation. The disordered stretch occupies residues 342 to 365; that stretch reads ARPRWPLDQSSPAMLGSGKKGAKA.

It belongs to the KAE1 / TsaD family. Requires Fe(2+) as cofactor.

Its subcellular location is the cytoplasm. The catalysed reaction is L-threonylcarbamoyladenylate + adenosine(37) in tRNA = N(6)-L-threonylcarbamoyladenosine(37) in tRNA + AMP + H(+). Functionally, required for the formation of a threonylcarbamoyl group on adenosine at position 37 (t(6)A37) in tRNAs that read codons beginning with adenine. Is involved in the transfer of the threonylcarbamoyl moiety of threonylcarbamoyl-AMP (TC-AMP) to the N6 group of A37, together with TsaE and TsaB. TsaD likely plays a direct catalytic role in this reaction. The polypeptide is tRNA N6-adenosine threonylcarbamoyltransferase (Ruegeria pomeroyi (strain ATCC 700808 / DSM 15171 / DSS-3) (Silicibacter pomeroyi)).